Consider the following 154-residue polypeptide: Transcriptional repressor NrdR (154 aa).

The segment at 3 to 34 is a zinc-finger region; the sequence is CPFCTHPDTRVADSRLMEERNAVRRRRHCPNC. The ATP-cone domain occupies 49 to 139; it reads PAVIGPDKKR…LHKRFDNPAD (91 aa).

This sequence belongs to the NrdR family. Requires Zn(2+) as cofactor.

Negatively regulates transcription of bacterial ribonucleotide reductase nrd genes and operons by binding to NrdR-boxes. This is Transcriptional repressor NrdR from Neisseria meningitidis serogroup A / serotype 4A (strain DSM 15465 / Z2491).